Here is a 311-residue protein sequence, read N- to C-terminus: Pyrimidine-specific ribonucleoside hydrolase RihA (311 aa).

His240 is an active-site residue.

The protein belongs to the IUNH family. RihA subfamily.

Its function is as follows. Hydrolyzes cytidine or uridine to ribose and cytosine or uracil, respectively. This Salmonella paratyphi C (strain RKS4594) protein is Pyrimidine-specific ribonucleoside hydrolase RihA.